We begin with the raw amino-acid sequence, 78 residues long: Sec-independent protein translocase protein TatA (78 aa).

Residues 1–21 (MGSLSIWHWLIVLLIVALVFG) form a helical membrane-spanning segment. 2 stretches are compositionally biased toward basic and acidic residues: residues 39–57 (FKEGMKDGETPEGQQRDQL) and 65–78 (VDAKEKAPHSGDSR). Positions 39–78 (FKEGMKDGETPEGQQRDQLSRTNTVDVDAKEKAPHSGDSR) are disordered.

This sequence belongs to the TatA/E family. The Tat system comprises two distinct complexes: a TatABC complex, containing multiple copies of TatA, TatB and TatC subunits, and a separate TatA complex, containing only TatA subunits. Substrates initially bind to the TatABC complex, which probably triggers association of the separate TatA complex to form the active translocon.

It is found in the cell inner membrane. Functionally, part of the twin-arginine translocation (Tat) system that transports large folded proteins containing a characteristic twin-arginine motif in their signal peptide across membranes. TatA could form the protein-conducting channel of the Tat system. This is Sec-independent protein translocase protein TatA from Paraburkholderia phymatum (strain DSM 17167 / CIP 108236 / LMG 21445 / STM815) (Burkholderia phymatum).